Reading from the N-terminus, the 256-residue chain is Alcohol dehydrogenase (256 aa).

Residue 12-35 (FVAGLGGIGLDTSKELLKRDLKNL) participates in NAD(+) binding. Ser-140 provides a ligand contact to substrate. The active-site Proton acceptor is Tyr-153.

This sequence belongs to the short-chain dehydrogenases/reductases (SDR) family. As to quaternary structure, homodimer.

It catalyses the reaction a primary alcohol + NAD(+) = an aldehyde + NADH + H(+). It carries out the reaction a secondary alcohol + NAD(+) = a ketone + NADH + H(+). In Drosophila sechellia (Fruit fly), this protein is Alcohol dehydrogenase (Adh).